The primary structure comprises 162 residues: RNA pyrophosphohydrolase (162 aa).

The Nudix hydrolase domain occupies 11-155; that stretch reads PYRPCVGIVL…KRAVYEEVVA (145 aa). The Nudix box signature appears at 45–66; the sequence is GGIDEGEKPREAALRELWEETG.

This sequence belongs to the Nudix hydrolase family. RppH subfamily. A divalent metal cation is required as a cofactor.

Its function is as follows. Accelerates the degradation of transcripts by removing pyrophosphate from the 5'-end of triphosphorylated RNA, leading to a more labile monophosphorylated state that can stimulate subsequent ribonuclease cleavage. In Cereibacter sphaeroides (strain ATCC 17029 / ATH 2.4.9) (Rhodobacter sphaeroides), this protein is RNA pyrophosphohydrolase.